A 227-amino-acid polypeptide reads, in one-letter code: Myogenin (227 aa).

The 52-residue stretch at 82-133 folds into the bHLH domain; it reads DRRRAATLREKRRLKKVNEAFEALKRSTLLNPNQRLPKVEILRSAIQYIERL. Residues 147 to 196 are disordered; the sequence is QRELRYRPAAPQPAAPSECGSGSSSCSPEWSTQLEFGTNPADHLLSDDQA. The span at 161–175 shows a compositional bias: low complexity; it reads APSECGSGSSSCSPE.

As to quaternary structure, homodimer and heterodimer. Efficient DNA binding requires dimerization with another bHLH protein.

The protein localises to the nucleus. Acts as a transcriptional activator that promotes transcription of muscle-specific target genes and plays a role in muscle differentiation. Induces fibroblasts to differentiate into myoblasts. Probable sequence specific DNA-binding protein. The sequence is that of Myogenin (MYOG) from Gallus gallus (Chicken).